Reading from the N-terminus, the 101-residue chain is Gamma-secretase subunit PEN-2 (101 aa).

Residues methionine 1 to lysine 17 lie on the Cytoplasmic side of the membrane. Positions tyrosine 18–tryptophan 36 form an intramembrane region, helical. The Cytoplasmic portion of the chain corresponds to phenylalanine 37 to valine 57. The chain crosses the membrane as a helical span at residues tryptophan 58 to phenylalanine 78. Residues glutamine 79–proline 101 are Lumenal-facing.

It belongs to the PEN-2 family. In terms of assembly, the functional gamma-secretase complex is composed of at least four polypeptides: a presenilin homodimer (PSEN1 or PSEN2), nicastrin (NCSTN), APH1 (APH1A or APH1B) and PSENEN.

Its subcellular location is the endoplasmic reticulum membrane. The protein localises to the golgi apparatus. It is found in the golgi stack membrane. It localises to the cell membrane. The protein resides in the membrane. Essential subunit of the gamma-secretase complex, an endoprotease complex that catalyzes the intramembrane cleavage of integral membrane proteins such as Notch receptors and APP (amyloid-beta precursor protein). The gamma-secretase complex plays a role in Notch and Wnt signaling cascades and regulation of downstream processes via its role in processing key regulatory proteins, and by regulating cytosolic CTNNB1 levels. PSENEN modulates both endoproteolysis of presenilin and gamma-secretase activity. The chain is Gamma-secretase subunit PEN-2 (Psenen) from Mus musculus (Mouse).